A 110-amino-acid polypeptide reads, in one-letter code: Small ribosomal subunit protein eS25 (110 aa).

The segment at 1–39 (MPPKAAGGKSKQIQASKAAAKGSSGGAGRKKWSKGRSRE) is disordered.

This sequence belongs to the eukaryotic ribosomal protein eS25 family.

The sequence is that of Small ribosomal subunit protein eS25 (rps25) from Dictyostelium discoideum (Social amoeba).